Here is a 144-residue protein sequence, read N- to C-terminus: Galectin b (144 aa).

A Galectin domain is found at 1 to 138; sequence DHIDLEFDVG…DAVLRKLCVV (138 aa).

Lectin that binds beta-galactoside and a wide array of complex carbohydrates. The chain is Galectin b from Aplysina lactuca (Marine sponge).